The primary structure comprises 247 residues: tRNA uridine(34) hydroxylase (247 aa).

Residues 124-218 enclose the Rhodanese domain; the sequence is TKQDVIVIDT…YLEDTQNKNN (95 aa). Cysteine 178 acts as the Cysteine persulfide intermediate in catalysis.

It belongs to the TrhO family.

The enzyme catalyses uridine(34) in tRNA + AH2 + O2 = 5-hydroxyuridine(34) in tRNA + A + H2O. Functionally, catalyzes oxygen-dependent 5-hydroxyuridine (ho5U) modification at position 34 in tRNAs. This is tRNA uridine(34) hydroxylase from Rickettsia rickettsii (strain Iowa).